The chain runs to 354 residues: MAESPTEEAATAGAGAAGPGASSVAGVVGVSGSGGGFGPPFLPDVWAAAAAAGGAGGPGSGLAPLPGLPPSAAAHGAALLSHWDPTLSSDWDGERTAPQCLLRIKRDIMSIYKEPPPGMFVVPDTVDMTKIHALITGPFDTPYEGGFFLFVFRCPPDYPIHPPRVKLMTTGNNTVRFNPNFYRNGKVCLSILGTWTGPAWSPAQSISSVLISIQSLMTENPYHNEPGFEQERHPGDSKNYNECIRHETIRVAVCDMMEGKCPCPEPLRGVMEKSFLEYYDFYEVACKDRLHLQGQTMQDPFGEKRGHFDYQSLLMRLGLIRQKVLERLHNENAEMDSDSSSSGTETDLHGSLRV.

The segment at 1–21 (MAESPTEEAATAGAGAAGPGA) is disordered. The UBC core domain occupies 99 to 253 (QCLLRIKRDI…IRHETIRVAV (155 aa)). C188 (glycyl thioester intermediate) is an active-site residue. Residues 332–354 (NAEMDSDSSSSGTETDLHGSLRV) form a disordered region. Position 337 is a phosphoserine (S337).

This sequence belongs to the ubiquitin-conjugating enzyme family. Widely expressed. Highly in placenta, pancreas, spleen and testis.

The protein localises to the cytoplasm. Its subcellular location is the nucleus. The enzyme catalyses S-ubiquitinyl-[E1 ubiquitin-activating enzyme]-L-cysteine + [E2 ubiquitin-conjugating enzyme]-L-cysteine = [E1 ubiquitin-activating enzyme]-L-cysteine + S-ubiquitinyl-[E2 ubiquitin-conjugating enzyme]-L-cysteine.. It participates in protein modification; protein ubiquitination. Its function is as follows. Catalyzes the covalent attachment of ubiquitin to other proteins. Specific substrate for UBA6, not charged with ubiquitin by UBE1. May be involved in apoptosis regulation. The polypeptide is Ubiquitin-conjugating enzyme E2 Z (UBE2Z) (Homo sapiens (Human)).